We begin with the raw amino-acid sequence, 260 residues long: Dynein regulatory complex subunit 6 (260 aa).

The span at 1 to 13 shows a compositional bias: basic residues; that stretch reads MAPKKKGGGKKKK. The interval 1–43 is disordered; that stretch reads MAPKKKGGGKKKKKDDGAEPPHDGSWERAVESGTWEKPVTDLP. Basic and acidic residues predominate over residues 14–30; it reads KDDGAEPPHDGSWERAV.

It belongs to the DRC6 family. In terms of assembly, component of the nexin-dynein regulatory complex (N-DRC).

It localises to the cytoplasm. The protein localises to the cytoskeleton. Its subcellular location is the flagellum axoneme. In terms of biological role, component of the nexin-dynein regulatory complex (N-DRC), a key regulator of ciliary/flagellar motility which maintains the alignment and integrity of the distal axoneme and regulates microtubule sliding in motile axonemes. The polypeptide is Dynein regulatory complex subunit 6 (Chlamydomonas reinhardtii (Chlamydomonas smithii)).